Reading from the N-terminus, the 141-residue chain is Zinc finger HIT domain-containing protein 3 (141 aa).

Residues 1-28 (LEKPKYRCPACRVPYCSVACFRKHKEQC) form an HIT-type; degenerate zinc finger. 4 residues coordinate Zn(2+): Cys8, Cys11, His24, and Cys28. Residue Ser66 is modified to Phosphoserine.

As to quaternary structure, thyroid receptor interacting proteins (TRIPs) specifically interact with the ligand binding domain of the thyroid receptor (TR). Requires the presence of thyroid hormone for its interaction. Interacts with NUFIP1. Interacts (via HIT-type zinc finger) with the RUVBL1/RUVBL2 complex in the presence of ADP.

Its subcellular location is the cytoplasm. It localises to the nucleus. The polypeptide is Zinc finger HIT domain-containing protein 3 (ZNHIT3) (Pan troglodytes (Chimpanzee)).